Consider the following 2104-residue polypeptide: Protein Ycf2 (2104 aa).

1396-1403 (GPVETGRS) serves as a coordination point for ATP.

Belongs to the Ycf2 family.

Its subcellular location is the plastid. The protein localises to the chloroplast stroma. Its function is as follows. Probable ATPase of unknown function. Its presence in a non-photosynthetic plant (Epifagus virginiana) and experiments in tobacco indicate that it has an essential function which is probably not related to photosynthesis. In Adiantum capillus-veneris (Maidenhair fern), this protein is Protein Ycf2 (ycf2-A).